A 688-amino-acid polypeptide reads, in one-letter code: Elongation factor G (688 aa).

Residues 8–282 form the tr-type G domain; it reads EKFRNFGIMA…GVVDYLPSPL (275 aa). GTP-binding positions include 17–24, 81–85, and 135–138; these read AHIDAGKT, DTPGH, and NKMD.

Belongs to the TRAFAC class translation factor GTPase superfamily. Classic translation factor GTPase family. EF-G/EF-2 subfamily.

The protein resides in the cytoplasm. Functionally, catalyzes the GTP-dependent ribosomal translocation step during translation elongation. During this step, the ribosome changes from the pre-translocational (PRE) to the post-translocational (POST) state as the newly formed A-site-bound peptidyl-tRNA and P-site-bound deacylated tRNA move to the P and E sites, respectively. Catalyzes the coordinated movement of the two tRNA molecules, the mRNA and conformational changes in the ribosome. The protein is Elongation factor G of Clostridium perfringens (strain 13 / Type A).